The following is a 996-amino-acid chain: PDZ domain-containing protein C23G3.12c (996 aa).

The tract at residues 1 to 35 (MSIKKRARAGSKSDDIGNKTPKKNGIEHEATKSSE) is disordered. PDZ domains follow at residues 280 to 358 (SRLG…QRGS), 745 to 827 (EFRA…LREG), and 860 to 930 (RAVR…STFD). Positions 972–996 (KNPSMGFTIDEEVDDNTFDTEGEQQ) are disordered. The segment covering 980 to 996 (IDEEVDDNTFDTEGEQQ) has biased composition (acidic residues).

It belongs to the peptidase S1C family.

The protein is PDZ domain-containing protein C23G3.12c of Schizosaccharomyces pombe (strain 972 / ATCC 24843) (Fission yeast).